The sequence spans 440 residues: Xylose isomerase (440 aa).

The Mg(2+) site is built by aspartate 307 and aspartate 309.

It belongs to the xylose isomerase family. In terms of assembly, homotetramer. It depends on Mg(2+) as a cofactor.

It localises to the cytoplasm. The enzyme catalyses alpha-D-xylose = alpha-D-xylulofuranose. The polypeptide is Xylose isomerase (Escherichia coli (strain K12 / MC4100 / BW2952)).